The primary structure comprises 172 residues: Large ribosomal subunit protein uL10 (172 aa).

This sequence belongs to the universal ribosomal protein uL10 family. Part of the ribosomal stalk of the 50S ribosomal subunit. The N-terminus interacts with L11 and the large rRNA to form the base of the stalk. The C-terminus forms an elongated spine to which L12 dimers bind in a sequential fashion forming a multimeric L10(L12)X complex.

Functionally, forms part of the ribosomal stalk, playing a central role in the interaction of the ribosome with GTP-bound translation factors. This is Large ribosomal subunit protein uL10 from Brucella abortus (strain S19).